The primary structure comprises 540 residues: Putative BTB/POZ domain-containing protein R224 (540 aa).

The BTB domain maps to 16–88 (TDLELTLIDE…FYKNPIKYKN (73 aa)). The helical transmembrane segment at 356–376 (IFVSLLNDIIFVLSSINMYFI) threads the bilayer.

This sequence belongs to the mimivirus BTB/WD family.

The protein localises to the membrane. The chain is Putative BTB/POZ domain-containing protein R224 from Acanthamoeba polyphaga (Amoeba).